We begin with the raw amino-acid sequence, 583 residues long: Zinc finger protein 277 (583 aa).

2 C2H2-type zinc fingers span residues 351–375 (LQCL…KKQH) and 482–508 (HQCK…DTKH).

The protein belongs to the ZNF277 family. As to quaternary structure, interacts (via zinc-finger domains) with RPS2/40S ribosomal protein S2, perhaps as nascent RPS2 is synthesized during translation; the interaction is direct; the interaction is extra-ribosomal. Interaction with RPS2 competes with the binding of RPS2 to protein arginine methyltransferase PRMT3. Interacts with Polycomb group (PcG) complex protein BMI1. May be part of a complex including at least ZNF277, BMI1 and RNF2/RING2.

It localises to the nucleus. The protein resides in the cytoplasm. Its subcellular location is the nucleolus. The protein localises to the chromosome. Probable transcription factor. Involved in modulation of cellular senescence; represses transcription of the tumor suppressor gene INK4A/ARF, perhaps acting via the Polycomb group (PcG) complex PRC1. In Mus musculus (Mouse), this protein is Zinc finger protein 277.